Reading from the N-terminus, the 420-residue chain is Glutamyl-tRNA reductase (420 aa).

Substrate-binding positions include 49-52 (TCNR), Ser-109, 114-116 (EPQ), and Gln-120. The active-site Nucleophile is Cys-50. An NADP(+)-binding site is contributed by 189–194 (GAGETI).

Belongs to the glutamyl-tRNA reductase family. In terms of assembly, homodimer.

It carries out the reaction (S)-4-amino-5-oxopentanoate + tRNA(Glu) + NADP(+) = L-glutamyl-tRNA(Glu) + NADPH + H(+). It functions in the pathway porphyrin-containing compound metabolism; protoporphyrin-IX biosynthesis; 5-aminolevulinate from L-glutamyl-tRNA(Glu): step 1/2. Functionally, catalyzes the NADPH-dependent reduction of glutamyl-tRNA(Glu) to glutamate 1-semialdehyde (GSA). This is Glutamyl-tRNA reductase from Serratia proteamaculans (strain 568).